Here is a 904-residue protein sequence, read N- to C-terminus: MLRRSPARVVAYQLLPFLYTRSFSEASRTLRRELRGGNGRIRPELLERVSRLLVLGRYEALHDLSLDFSDELLNSILRRLRLNPEACLEIFNLASKQQKFRPDYKAYCKMVHILSRARNYQQTKSYLCELVALNHSGFVVWGELVRVFKEFSFSPTVFDMILKVYAEKGLVKNALHVFDNMGNYGRIPSLLSCNSLLSNLVRKGENFVALHVYDQMISFEVSPDVFTCSIVVNAYCRSGNVDKAMVFAKETESSLGLELNVVTYNSLINGYAMIGDVEGMTRVLRLMSERGVSRNVVTYTSLIKGYCKKGLMEEAEHVFELLKEKKLVADQHMYGVLMDGYCRTGQIRDAVRVHDNMIEIGVRTNTTICNSLINGYCKSGQLVEAEQIFSRMNDWSLKPDHHTYNTLVDGYCRAGYVDEALKLCDQMCQKEVVPTVMTYNILLKGYSRIGAFHDVLSLWKMMLKRGVNADEISCSTLLEALFKLGDFNEAMKLWENVLARGLLTDTITLNVMISGLCKMEKVNEAKEILDNVNIFRCKPAVQTYQALSHGYYKVGNLKEAFAVKEYMERKGIFPTIEMYNTLISGAFKYRHLNKVADLVIELRARGLTPTVATYGALITGWCNIGMIDKAYATCFEMIEKGITLNVNICSKIANSLFRLDKIDEACLLLQKIVDFDLLLPGYQSLKEFLEASATTCLKTQKIAESVENSTPKKLLVPNNIVYNVAIAGLCKAGKLEDARKLFSDLLSSDRFIPDEYTYTILIHGCAIAGDINKAFTLRDEMALKGIIPNIVTYNALIKGLCKLGNVDRAQRLLHKLPQKGITPNAITYNTLIDGLVKSGNVAEAMRLKEKMIEKGLVRGSDKQGDVDIPKEVVLDPEVKLGSTGVIEMNSNELYDVRRVSEAVV.

PPR repeat units follow at residues 154 to 188 (SPTV…GRIP), 189 to 223 (SLLS…EVSP), 224 to 254 (DVFT…TESS), 260 to 294 (NVVT…GVSR), 295 to 329 (NVVT…KLVA), 330 to 364 (DQHM…GVRT), 365 to 399 (NTTI…SLKP), 400 to 434 (DHHT…EVVP), 435 to 469 (TVMT…GVNA), 470 to 504 (DEIS…GLLT), 505 to 539 (DTIT…RCKP), 540 to 574 (AVQT…GIFP), 575 to 609 (TIEM…GLTP), 610 to 644 (TVAT…GITL), 645 to 679 (NVNI…DLLL), 718 to 753 (NNIV…RFIP), 754 to 788 (DEYT…GIIP), 789 to 823 (NIVT…GITP), and 824 to 858 (NAIT…GLVR).

The protein belongs to the PPR family. P subfamily.

The chain is Putative pentatricopeptide repeat-containing protein At1g19290 from Arabidopsis thaliana (Mouse-ear cress).